We begin with the raw amino-acid sequence, 293 residues long: Fructokinase (293 aa).

Threonine 133 is an ATP binding site. Zn(2+) contacts are provided by histidine 156, cysteine 174, histidine 177, and cysteine 180. ATP-binding positions include proline 188 and 236-240 (GVMAQ).

It belongs to the ROK (NagC/XylR) family. The cofactor is Mg(2+).

The enzyme catalyses D-fructose + ATP = D-fructose 6-phosphate + ADP + H(+). Its activity is regulated as follows. Inhibition by zinc ions. In Streptococcus mutans serotype c (strain ATCC 700610 / UA159), this protein is Fructokinase (scrK).